We begin with the raw amino-acid sequence, 344 residues long: L-rhamnose-proton symporter (344 aa).

Transmembrane regions (helical) follow at residues 4–24, 38–58, 72–92, 101–121, 137–157, 175–195, 214–234, 259–279, 290–310, and 321–341; these read AITM…CFYA, WSVG…AILL, TLLP…NYGL, MGIG…TPIL, TLLG…AGQL, LVLA…MNAA, LPSY…FCFI, VLLS…YAWG, MSWM…GLVL, and VGVL…VGLG.

It belongs to the L-rhamnose transporter (TC 2.A.7.6) family.

The protein resides in the cell inner membrane. The catalysed reaction is L-rhamnopyranose(in) + H(+)(in) = L-rhamnopyranose(out) + H(+)(out). Uptake of L-rhamnose across the cytoplasmic membrane with the concomitant transport of protons into the cell (symport system). This is L-rhamnose-proton symporter from Enterobacter sp. (strain 638).